The following is a 491-amino-acid chain: UDP-N-acetylmuramate--L-alanine ligase (491 aa).

126 to 132 lines the ATP pocket; it reads GTHGKTT.

Belongs to the MurCDEF family.

Its subcellular location is the cytoplasm. The catalysed reaction is UDP-N-acetyl-alpha-D-muramate + L-alanine + ATP = UDP-N-acetyl-alpha-D-muramoyl-L-alanine + ADP + phosphate + H(+). Its pathway is cell wall biogenesis; peptidoglycan biosynthesis. Cell wall formation. The sequence is that of UDP-N-acetylmuramate--L-alanine ligase from Enterobacter sp. (strain 638).